Consider the following 1130-residue polypeptide: Roquin-1 (1130 aa).

7 residues coordinate Zn(2+): Cys14, Cys17, Cys33, His35, Cys38, Cys50, and Asp53. The segment at 14 to 54 (CPICTQTFDETIRKPISLGCGHTVCKMCLNKLHRKACPFDQ) adopts an RING-type; degenerate zinc-finger fold. The interval 128–176 (VLSRPMQRKLVTLVHCQLVEEEGRIRAMRAARSLGERTVTELILQHQNP) is HEPN-N. An ROQ region spans residues 177–326 (QQLSSNLWAA…MQSIIDKLQT (150 aa)). An HEPN-C region spans residues 327–399 (PASFAQSVQE…GLVDYIQNHS (73 aa)). The segment at 413–441 (KYKTYMCRDMKQRGGCPRGASCTFAHSQE) adopts a C3H1-type zinc-finger fold. A Phosphoserine modification is found at Ser462. Disordered regions lie at residues 493–567 (LPNG…DLPP) and 722–750 (PHPAQIRPSYPRDPPYSRLPPPQPHPSLD). Positions 497–506 (IASSGSTVTQ) are enriched in polar residues. 2 positions are modified to phosphoserine: Ser531 and Ser535. Composition is skewed to pro residues over residues 553-567 (NPHPVPPRGPTDLPP) and 732-746 (PRDPPYSRLPPPQPH). A phosphoserine mark is found at Ser861, Ser1107, and Ser1110. Residues 1100 to 1130 (KTSSLNLSEDSEGGGDNNDSQRSGVVSNSAP) are disordered. Polar residues predominate over residues 1116–1130 (NNDSQRSGVVSNSAP).

As to quaternary structure, interacts with DDX6 and EDC4. Interacts with CCR4-NOT deadenylase complex. Interacts with RC3H1; the interaction is RNA independent. Proteolytically cleaved after Arg-510 and Arg-579 by MALT1 in activated CD4(+) T cells; cleavage at Arg-510 and Arg-579 is critical for promoting RC3H1 degradation in response to T-cell receptor (TCR) stimulation, and hence is necessary for prolonging the stability of a set of mRNAs controlling Th17 cell differentiation. In terms of tissue distribution, widely expressed, with highest levels in lymph node and thymus and slightly lesser amounts in brain, lung, and spleen (at protein level). Very weak expression in heart, muscle, and kidney (at protein level). Expressed in CD4(+) helper T-cells (at protein level).

Its subcellular location is the cytoplasm. It localises to the P-body. The protein resides in the cytoplasmic granule. The enzyme catalyses S-ubiquitinyl-[E2 ubiquitin-conjugating enzyme]-L-cysteine + [acceptor protein]-L-lysine = [E2 ubiquitin-conjugating enzyme]-L-cysteine + N(6)-ubiquitinyl-[acceptor protein]-L-lysine.. It functions in the pathway protein modification; protein ubiquitination. In terms of biological role, post-transcriptional repressor of mRNAs containing a conserved stem loop motif, called constitutive decay element (CDE), which is often located in the 3'-UTR, as in HMGXB3, ICOS, IER3, NFKBID, NFKBIZ, PPP1R10, TNF, TNFRSF4 and in many more mRNAs. Cleaves translationally inactive mRNAs harboring a stem-loop (SL), often located in their 3'-UTRs, during the early phase of inflammation in a helicase UPF1-independent manner. Binds to CDE and promotes mRNA deadenylation and degradation. This process does not involve miRNAs. In follicular helper T (Tfh) cells, represses of ICOS and TNFRSF4/Ox40 expression, thus preventing spontaneous Tfh cell differentiation, germinal center B-cell differentiation in the absence of immunization and autoimmunity. In resting or LPS-stimulated macrophages, controls inflammation by suppressing TNF expression. Also recognizes CDE in its own mRNA and in that of paralogous RC3H2, possibly leading to feedback loop regulation. Inhibits cooperatively with ZC3H12A the differentiation of helper T cells Th17 in lungs. They repress target mRNA encoding the Th17 cell-promoting factors IL6, ICOS, REL, IRF4, NFKBID and NFKBIZ. The cooperation requires RNA-binding by RC3H1 and the nuclease activity of ZC3H12A. Recognizes and binds mRNAs containing a hexaloop stem-loop motif, called alternative decay element (ADE). Together with ZC3H12A, destabilizes TNFRSF4/OX40 mRNA by binding to the conserved stem loop structure in its 3'UTR. Able to interact with double-stranded RNA. miRNA-binding protein that regulates microRNA homeostasis. Enhances DICER-mediated processing of pre-MIR146a but reduces mature MIR146a levels through an increase of 3' end uridylation. Both inhibits ICOS mRNA expression and they may act together to exert the suppression. Acts as a ubiquitin E3 ligase. Pairs with E2 enzymes UBE2A, UBE2B, UBE2D2, UBE2F, UBE2G1, UBE2G2 and UBE2L3 and produces polyubiquitin chains. Shows the strongest activity when paired with UBE2N:UBE2V1 or UBE2N:UBE2V2 E2 complexes and generate both short and long polyubiquitin chains. The chain is Roquin-1 from Mus musculus (Mouse).